The following is a 583-amino-acid chain: Epsin-2 (583 aa).

The a 1,2-diacyl-sn-glycero-3-phospho-(1D-myo-inositol-4,5-bisphosphate) site is built by Arg8, Lys11, Arg25, Asn30, Arg63, and His73. In terms of domain architecture, ENTH spans 12–144 (NIVNSYSEAE…KDEERLKVER (133 aa)). The span at 165–181 (QITFGRGSSQPNLSISH) shows a compositional bias: polar residues. The disordered stretch occupies residues 165-217 (QITFGRGSSQPNLSISHSEQEYGKAGGSPASYHGSTSPRVSSELEQARPQTSG). Arg170 carries the post-translational modification Omega-N-methylarginine. Ser173, Ser192, and Ser195 each carry phosphoserine. Residues 197–216 (HGSTSPRVSSELEQARPQTS) show a composition bias toward polar residues. UIM domains follow at residues 218 to 237 (EEELQLQLALAMSREVAEQE) and 243 to 262 (GDDLRLQMALEESRRDTVKV). 2 disordered regions span residues 293-384 (SGPV…KPSP) and 411-457 (TSKK…PESF). A run of 4 repeats spans residues 301–303 (EPW), 313–315 (NPW), 326–328 (DPW), and 340–342 (DPW). Positions 301 to 315 (EPWSTGTPANQTNPW) are enriched in polar residues. Residues 301–377 (EPWSTGTPAN…SDAGKTADAW (77 aa)) are 6 X 3 AA repeats of [DE]-P-W. Residues 346-355 (TTASIQSVPK) are compositionally biased toward polar residues. Tandem repeats lie at residues 358–360 (DPW) and 375–377 (DAW). Position 431 is a phosphoserine (Ser431). Over residues 437-448 (SQSLTSASSKPS) the composition is skewed to low complexity. Thr453 carries the post-translational modification Phosphothreonine. 2 consecutive repeat copies span residues 482–484 (NPF) and 496–498 (NPF). The tract at residues 482–581 (NPFLAPGAAA…AQPAGTTNPF (100 aa)) is 3 X 3 AA repeats of N-P-F. A Phosphoserine modification is found at Ser514. Repeat 3 spans residues 579-581 (NPF).

The protein belongs to the epsin family. As to quaternary structure, binds AP-2 and clathrin. Interacts with ITSN1. Interacts with UBQLN2. Binds EPS15. Post-translationally, ubiquitinated. In terms of tissue distribution, highly expressed in brain. Detected at lower levels in lung, liver, muscle and testis.

The protein resides in the cytoplasm. Its function is as follows. Plays a role in the formation of clathrin-coated invaginations and endocytosis. This Rattus norvegicus (Rat) protein is Epsin-2 (Epn2).